Here is a 355-residue protein sequence, read N- to C-terminus: Serpentine receptor class epsilon-1 (355 aa).

7 helical membrane-spanning segments follow: residues 28–48 (FELLAMIIEIPSFLLVIYATI), 56–76 (LNFIGLFMLLGYYVFLVGRFI), 102–122 (ILSSILQFFYMGCACGISLAV), 144–164 (ISLFLCSEFTVACGVSAIVML), 172–192 (VMAFLGVFISCASFLFYLVLF), 232–252 (VVLFSGVNNFVMAIILTMYMS), and 268–288 (FAFNCCVLLYSFLMLIIIIFS).

It belongs to the nematode receptor-like protein sre family.

The protein localises to the membrane. This is Serpentine receptor class epsilon-1 (sre-1) from Caenorhabditis elegans.